The sequence spans 147 residues: UPF0735 ACT domain-containing protein GK2605 (147 aa).

In terms of domain architecture, ACT spans 69–144; it reads TLFFHLEDRS…FVEKVEIVGS (76 aa).

Belongs to the UPF0735 family.

The polypeptide is UPF0735 ACT domain-containing protein GK2605 (Geobacillus kaustophilus (strain HTA426)).